Reading from the N-terminus, the 187-residue chain is Intraflagellar transport protein 22 homolog (187 aa).

GTP-binding positions include 10–17 (GPSECGKT), 65–69 (DCAGD), and 125–128 (HKPG).

The protein belongs to the small GTPase superfamily. Rab family.

In Danio rerio (Zebrafish), this protein is Intraflagellar transport protein 22 homolog (ift22).